The chain runs to 379 residues: Protein COS4 (379 aa).

4 helical membrane-spanning segments follow: residues 43 to 63 (IYKSLAFRIWMLLWLPLSVWW), 70 to 90 (IYPLMVSLLVLFWGPVFVLVI), 233 to 253 (ISNIFMLIPFLNFLCCIYVSR), and 255 to 275 (MCLLLRTLYLGWILFMLVQGF).

This sequence belongs to the DUP/COS family.

It is found in the membrane. The chain is Protein COS4 (COS4) from Saccharomyces cerevisiae (strain ATCC 204508 / S288c) (Baker's yeast).